The sequence spans 314 residues: Methionyl-tRNA formyltransferase (314 aa).

112–115 serves as a coordination point for (6S)-5,6,7,8-tetrahydrofolate; that stretch reads SLLP.

This sequence belongs to the Fmt family.

The enzyme catalyses L-methionyl-tRNA(fMet) + (6R)-10-formyltetrahydrofolate = N-formyl-L-methionyl-tRNA(fMet) + (6S)-5,6,7,8-tetrahydrofolate + H(+). Its function is as follows. Attaches a formyl group to the free amino group of methionyl-tRNA(fMet). The formyl group appears to play a dual role in the initiator identity of N-formylmethionyl-tRNA by promoting its recognition by IF2 and preventing the misappropriation of this tRNA by the elongation apparatus. This is Methionyl-tRNA formyltransferase from Legionella pneumophila (strain Paris).